Here is a 345-residue protein sequence, read N- to C-terminus: 2-oxoglutarate-dependent ethylene/succinate-forming enzyme (345 aa).

Residues Gly167–Pro288 form the Fe2OG dioxygenase domain. Positions 191 and 270 each coordinate Fe cation.

It belongs to the iron/ascorbate-dependent oxidoreductase family. In terms of assembly, monomer. It depends on Fe(2+) as a cofactor.

It carries out the reaction 2-oxoglutarate + O2 + 2 H(+) = ethene + 3 CO2 + H2O. The catalysed reaction is L-arginine + 2-oxoglutarate + O2 = guanidine + L-glutamate 5-semialdehyde + succinate + CO2. Its pathway is alkene biosynthesis; ethylene biosynthesis via 2-oxoglutarate. Functionally, simultaneously catalyzes two reactions, namely formation of ethylene and of succinate from 2-oxoglutarate. This chain is 2-oxoglutarate-dependent ethylene/succinate-forming enzyme (efe), found in Ralstonia nicotianae (strain ATCC BAA-1114 / GMI1000) (Ralstonia solanacearum).